The sequence spans 344 residues: MSNAITMGIFWHLIGAASAACFYAPFKKVKKWSWETMWSVGGIVSWIILPWAISALLLPNFWAYYSSFSLSTLLPVFLFGAMWGIGNINYGLTMRYLGMSMGIGIAIGITLIVGTLMTPIINGNFDVLINTEGGRMTLLGVLVALIGVGIVTRAGQLKERKMGIKAEEFNLKKGLVLAVMCGIFSAGMSFAMNAAKPMHEAAAALGVDPLYVALPSYVIIMGGGAIINLGFCFIRLAKVKDLSLKADFSLAKPLITHNVLLSALGGLMWYLQFFFYAWGHARIPAQYDYISWMLHMSFYVLCGGIVGLVLKEWNNAGRRPVTVLSLGCVVIIVAANIVGIGMAN.

10 helical membrane-spanning segments follow: residues Ala4–Ala24, Trp38–Leu58, Phe68–Ile88, Met101–Ile121, Thr137–Leu157, Leu175–Ala195, Leu214–Ile234, Val259–Gly279, Ile290–Leu310, and Val323–Ala343.

Belongs to the L-rhamnose transporter (TC 2.A.7.6) family.

It localises to the cell inner membrane. It catalyses the reaction L-rhamnopyranose(in) + H(+)(in) = L-rhamnopyranose(out) + H(+)(out). Its function is as follows. Uptake of L-rhamnose across the cytoplasmic membrane with the concomitant transport of protons into the cell (symport system). In Escherichia coli (strain 55989 / EAEC), this protein is L-rhamnose-proton symporter.